Consider the following 159-residue polypeptide: NADH-quinone oxidoreductase subunit B (159 aa).

Positions 36, 37, 102, and 132 each coordinate [4Fe-4S] cluster.

The protein belongs to the complex I 20 kDa subunit family. As to quaternary structure, NDH-1 is composed of 14 different subunits. Subunits NuoB, C, D, E, F, and G constitute the peripheral sector of the complex. [4Fe-4S] cluster serves as cofactor.

It localises to the cell inner membrane. It carries out the reaction a quinone + NADH + 5 H(+)(in) = a quinol + NAD(+) + 4 H(+)(out). In terms of biological role, NDH-1 shuttles electrons from NADH, via FMN and iron-sulfur (Fe-S) centers, to quinones in the respiratory chain. The immediate electron acceptor for the enzyme in this species is believed to be ubiquinone. Couples the redox reaction to proton translocation (for every two electrons transferred, four hydrogen ions are translocated across the cytoplasmic membrane), and thus conserves the redox energy in a proton gradient. The sequence is that of NADH-quinone oxidoreductase subunit B from Acidovorax ebreus (strain TPSY) (Diaphorobacter sp. (strain TPSY)).